A 224-amino-acid polypeptide reads, in one-letter code: Peroxiredoxin-6 (224 aa).

A Thioredoxin domain is found at 5–169; the sequence is LLLGDEAPNF…ILRVVISLQL (165 aa). The interval 31 to 40 is required and sufficient for targeting to lysosomes and lamellar bodies; the sequence is DSWGILFSHP. The residue at position 44 (threonine 44) is a Phosphothreonine. The Cysteine sulfenic acid (-SOH) intermediate; for peroxidase activity role is filled by cysteine 47. The residue at position 63 (lysine 63) is an N6-acetyllysine. Tyrosine 89 carries the post-translational modification Phosphotyrosine. Aspartate 140 serves as the catalytic For phospholipase activity. The residue at position 177 (threonine 177) is a Phosphothreonine; by MAPK. Lysine 209 bears the N6-acetyllysine; alternate mark. An N6-succinyllysine; alternate modification is found at lysine 209.

Belongs to the peroxiredoxin family. Prx6 subfamily. Homodimer. Interacts with GSTP1; mediates PRDX6 glutathionylation and regeneration. Interacts with APEX1. Interacts with STH. May interact with FAM168B. May interact with HTR2A. Post-translationally, irreversibly inactivated by overoxidation of Cys-47 to sulfinic acid (Cys-SO(2)H) and sulfonic acid (Cys-SO(3)H) forms upon oxidative stress. Phosphorylation at Thr-177 by MAP kinases increases the phospholipase activity of the enzyme. The phosphorylated form exhibits a greater lysophosphatidylcholine acyltransferase activity compared to the non-phosphorylated form.

Its subcellular location is the cytoplasm. It localises to the lysosome. The catalysed reaction is a hydroperoxide + 2 glutathione = an alcohol + glutathione disulfide + H2O. The enzyme catalyses a 1,2-diacyl-sn-glycero-3-phosphocholine + H2O = a 1-acyl-sn-glycero-3-phosphocholine + a fatty acid + H(+). It catalyses the reaction a 1-acyl-sn-glycero-3-phosphocholine + an acyl-CoA = a 1,2-diacyl-sn-glycero-3-phosphocholine + CoA. It carries out the reaction 1-hexadecanoyl-sn-glycero-3-phosphocholine + hexadecanoyl-CoA = 1,2-dihexadecanoyl-sn-glycero-3-phosphocholine + CoA. The catalysed reaction is 1,2-dihexadecanoyl-sn-glycero-3-phosphocholine + H2O = 1-hexadecanoyl-sn-glycero-3-phosphocholine + hexadecanoate + H(+). Its function is as follows. Thiol-specific peroxidase that catalyzes the reduction of hydrogen peroxide and organic hydroperoxides to water and alcohols, respectively. Can reduce H(2)O(2) and short chain organic, fatty acid, and phospholipid hydroperoxides. Also has phospholipase activity, and can therefore either reduce the oxidized sn-2 fatty acyl group of phospholipids (peroxidase activity) or hydrolyze the sn-2 ester bond of phospholipids (phospholipase activity). These activities are dependent on binding to phospholipids at acidic pH and to oxidized phospholipds at cytosolic pH. Plays a role in cell protection against oxidative stress by detoxifying peroxides and in phospholipid homeostasis. Exhibits acyl-CoA-dependent lysophospholipid acyltransferase which mediates the conversion of lysophosphatidylcholine (1-acyl-sn-glycero-3-phosphocholine or LPC) into phosphatidylcholine (1,2-diacyl-sn-glycero-3-phosphocholine or PC). Shows a clear preference for LPC as the lysophospholipid and for palmitoyl CoA as the fatty acyl substrate. This chain is Peroxiredoxin-6 (PRDX6), found in Macaca fascicularis (Crab-eating macaque).